The primary structure comprises 228 residues: L-ribulose-5-phosphate 4-epimerase UlaF (228 aa).

Substrate is bound by residues 26–27 (GN), 43–44 (SG), and 72–73 (SS). 3 residues coordinate Zn(2+): Asp74, His93, and His95. Catalysis depends on Asp118, which acts as the Proton donor/acceptor. Zn(2+) is bound at residue His167. The active-site Proton donor/acceptor is the Tyr225.

It belongs to the aldolase class II family. AraD/FucA subfamily. The cofactor is Zn(2+).

The catalysed reaction is L-ribulose 5-phosphate = D-xylulose 5-phosphate. The protein operates within cofactor degradation; L-ascorbate degradation; D-xylulose 5-phosphate from L-ascorbate: step 4/4. Its function is as follows. Catalyzes the isomerization of L-ribulose 5-phosphate to D-xylulose 5-phosphate. Is involved in the anaerobic L-ascorbate utilization. This is L-ribulose-5-phosphate 4-epimerase UlaF from Escherichia coli O45:K1 (strain S88 / ExPEC).